Here is a 134-residue protein sequence, read N- to C-terminus: Complexin-2 (134 aa).

Residues 1-114 (MDFVMKQALG…CGDEEEEEEE (114 aa)) are disordered. Residues 15–85 (DMGKMLGGEE…EEKEAEEKAA (71 aa)) show a composition bias toward basic and acidic residues. Positions 28–84 (PDAQKKEEERQEALRQQEEERKAKHARMEAEREKVRQQIRDKYGLKKKEEKEAEEKA) form a coiled coil. An interaction with the SNARE complex region spans residues 41 to 97 (LRQQEEERKAKHARMEAEREKVRQQIRDKYGLKKKEEKEAEEKAALEQPCEGSLTRP). Ser93 is subject to Phosphoserine.

This sequence belongs to the complexin/synaphin family. As to quaternary structure, binds to the SNARE core complex containing SNAP25, VAMP2 and STX1A. Nervous system. Also present in adrenal chromaffin cells (at protein level).

It is found in the cytoplasm. The protein resides in the cytosol. It localises to the presynapse. Its subcellular location is the nucleus. The protein localises to the perikaryon. Functionally, negatively regulates the formation of synaptic vesicle clustering at active zone to the presynaptic membrane in postmitotic neurons. Positively regulates a late step in exocytosis of various cytoplasmic vesicles, such as synaptic vesicles and other secretory vesicles. Also involved in mast cell exocytosis. The polypeptide is Complexin-2 (CPLX2) (Bos taurus (Bovine)).